Reading from the N-terminus, the 435-residue chain is 5-methylthioadenosine/S-adenosylhomocysteine deaminase (435 aa).

Positions 65 and 67 each coordinate Zn(2+). Substrate-binding residues include Glu-94, Arg-150, and His-189. Residue His-216 participates in Zn(2+) binding. Substrate contacts are provided by Glu-219 and Asp-304. Asp-304 lines the Zn(2+) pocket.

This sequence belongs to the metallo-dependent hydrolases superfamily. MTA/SAH deaminase family. It depends on Zn(2+) as a cofactor.

It catalyses the reaction S-adenosyl-L-homocysteine + H2O + H(+) = S-inosyl-L-homocysteine + NH4(+). The catalysed reaction is S-methyl-5'-thioadenosine + H2O + H(+) = S-methyl-5'-thioinosine + NH4(+). Catalyzes the deamination of 5-methylthioadenosine and S-adenosyl-L-homocysteine into 5-methylthioinosine and S-inosyl-L-homocysteine, respectively. Is also able to deaminate adenosine. The protein is 5-methylthioadenosine/S-adenosylhomocysteine deaminase of Bacillus cereus (strain ZK / E33L).